Consider the following 371-residue polypeptide: Aminomethyltransferase (371 aa).

Belongs to the GcvT family. In terms of assembly, the glycine cleavage system is composed of four proteins: P, T, L and H.

It catalyses the reaction N(6)-[(R)-S(8)-aminomethyldihydrolipoyl]-L-lysyl-[protein] + (6S)-5,6,7,8-tetrahydrofolate = N(6)-[(R)-dihydrolipoyl]-L-lysyl-[protein] + (6R)-5,10-methylene-5,6,7,8-tetrahydrofolate + NH4(+). Its function is as follows. The glycine cleavage system catalyzes the degradation of glycine. In Cellvibrio japonicus (strain Ueda107) (Pseudomonas fluorescens subsp. cellulosa), this protein is Aminomethyltransferase.